A 308-amino-acid polypeptide reads, in one-letter code: Cap-specific mRNA (nucleoside-2'-O-)-methyltransferase (308 aa).

Tyrosine 30 provides a ligand contact to mRNA. S-adenosyl-L-methionine is bound by residues glutamine 46, tyrosine 74, glycine 76, glycine 80, aspartate 103, arginine 105, valine 124, and aspartate 147. A binding to NPH-I region spans residues proline 177 to leucine 257. The For methyltransferase activity role is filled by lysine 183. MRNA-binding positions include arginine 185 to phenylalanine 188, aspartate 190, serine 213 to glutamate 215, and glutamate 241.

The protein belongs to the class I-like SAM-binding methyltransferase superfamily. Poxvirus/kinetoplastid 2'-O-MTase family. Interacts with poly(A) polymerase catalytic subunit OPG063. Interacts with OPG109 and OPG123; these interactions might help linking transcription to capping and polyadenylation.

It is found in the virion. The catalysed reaction is a 5'-end (N(7)-methyl 5'-triphosphoguanosine)-ribonucleoside in mRNA + S-adenosyl-L-methionine = a 5'-end (N(7)-methyl 5'-triphosphoguanosine)-(2'-O-methyl-ribonucleoside) in mRNA + S-adenosyl-L-homocysteine + H(+). Functionally, displays methyltransferase, positive regulation of the poly(A) polymerase and transcription elongation activities. Involved in the modification of both mRNA ends and in intermediate and late gene positive transcription elongation. At the mRNAs 5' end, methylates the ribose 2' OH group of the first transcribed nucleotide, thereby producing a 2'-O-methylpurine cap. At the 3' end, functions as a processivity factor which stimulates the activity of the viral poly(A) polymerase OPG063 that creates mRNA's poly(A) tail. In the presence of OPG102, OPG063 does not dissociate from the RNA allowing tail elongation to around 250 adenylates. This chain is Cap-specific mRNA (nucleoside-2'-O-)-methyltransferase (OPG102), found in Fowlpox virus (strain NVSL) (FPV).